The primary structure comprises 88 residues: Cell division topological specificity factor (88 aa).

The protein belongs to the MinE family.

In terms of biological role, prevents the cell division inhibition by proteins MinC and MinD at internal division sites while permitting inhibition at polar sites. This ensures cell division at the proper site by restricting the formation of a division septum at the midpoint of the long axis of the cell. The chain is Cell division topological specificity factor from Acidovorax ebreus (strain TPSY) (Diaphorobacter sp. (strain TPSY)).